The primary structure comprises 218 residues: Protein-methionine-sulfoxide reductase heme-binding subunit MsrQ (218 aa).

5 helical membrane-spanning segments follow: residues 8–28 (VIVA…LLGW), 60–80 (FLLI…AVLI), 86–106 (LGLY…TLDL), 121–141 (PYIT…ITST), and 155–175 (VHML…WLVK).

Belongs to the MsrQ family. Heterodimer of a catalytic subunit (MsrP) and a heme-binding subunit (MsrQ). The cofactor is FMN. Heme b is required as a cofactor.

It localises to the cell inner membrane. Its function is as follows. Part of the MsrPQ system that repairs oxidized periplasmic proteins containing methionine sulfoxide residues (Met-O), using respiratory chain electrons. Thus protects these proteins from oxidative-stress damage caused by reactive species of oxygen and chlorine generated by the host defense mechanisms. MsrPQ is essential for the maintenance of envelope integrity under bleach stress, rescuing a wide series of structurally unrelated periplasmic proteins from methionine oxidation. MsrQ provides electrons for reduction to the reductase catalytic subunit MsrP, using the quinone pool of the respiratory chain. This Xanthomonas oryzae pv. oryzae (strain MAFF 311018) protein is Protein-methionine-sulfoxide reductase heme-binding subunit MsrQ.